The chain runs to 370 residues: Cytoplasmic envelopment protein 2 (370 aa).

The protein belongs to the herpesviridae cytoplasmic envelopment protein 2 family. Interacts with cytoplasmic envelopment protein 3 and with the capsid.

Its subcellular location is the virion tegument. It is found in the host cytoplasm. The protein resides in the host nucleus. Functionally, plays a critical role in cytoplasmic virus egress. Participates in the final step of tegumentation and envelope acquisition within the host cytoplasm by directly interacting with the capsid. Upon virion binding to target cell, a signaling cascade is triggered to disrupt the interaction with the capsid, thereby preparing capsid uncoating. This is Cytoplasmic envelopment protein 2 from Equine herpesvirus 1 (strain V592) (EHV-1).